The chain runs to 152 residues: Transcriptional regulator MraZ (152 aa).

SpoVT-AbrB domains follow at residues 5–52 and 81–124; these read ASAI…PFDE and AHEC…DETA.

It belongs to the MraZ family. As to quaternary structure, forms oligomers.

Its subcellular location is the cytoplasm. It is found in the nucleoid. The polypeptide is Transcriptional regulator MraZ (Shewanella sediminis (strain HAW-EB3)).